The sequence spans 225 residues: 3-dehydroquinate dehydratase (225 aa).

Residues S6, 30-32 (EWR), and R62 contribute to the 3-dehydroquinate site. The Proton donor/acceptor role is filled by H118. Residue K143 is the Schiff-base intermediate with substrate of the active site. Residues R186, S205, and Q209 each coordinate 3-dehydroquinate.

The protein belongs to the type-I 3-dehydroquinase family. In terms of assembly, homodimer.

It catalyses the reaction 3-dehydroquinate = 3-dehydroshikimate + H2O. The protein operates within metabolic intermediate biosynthesis; chorismate biosynthesis; chorismate from D-erythrose 4-phosphate and phosphoenolpyruvate: step 3/7. Functionally, involved in the third step of the chorismate pathway, which leads to the biosynthesis of aromatic amino acids. Catalyzes the cis-dehydration of 3-dehydroquinate (DHQ) and introduces the first double bond of the aromatic ring to yield 3-dehydroshikimate. This chain is 3-dehydroquinate dehydratase, found in Streptococcus pneumoniae (strain Taiwan19F-14).